The following is a 306-amino-acid chain: MALRHFLTLRDLSSLELNSILDRASELKRQQHANQVYQPFKGKVLGMIFEKSSTRTRISFEAGICQFGGSAIFLSPRDTQLGRGEPIEDSARVISSMLDIVMIRTFGHNIVERFASFSKVPVINGLTDDHHPCQLLADLQTYQEHRGSIKGKTVAWIGDGNNMCNSYMEAAHMMGFKLKVGSPKGYEPKPEFLAEFAHCVEVFNSAEDAAVNADLIVTDVWASMGQEEEQKLREKAFLTFQVNEALMALAHPECLFMHCLPAHRGEEISENMLDHKNSVVWDEAENRLHAQKALMEFLLNENAKRA.

Carbamoyl phosphate is bound by residues 53–56, Gln-80, Arg-104, and 131–134; these read STRT and HPCQ. L-ornithine-binding positions include Asn-162, Asp-219, and 223–224; that span reads SM. Residues 259 to 260 and Arg-287 each bind carbamoyl phosphate; that span reads CL.

The protein belongs to the aspartate/ornithine carbamoyltransferase superfamily. OTCase family.

It is found in the cytoplasm. It carries out the reaction carbamoyl phosphate + L-ornithine = L-citrulline + phosphate + H(+). The protein operates within amino-acid biosynthesis; L-arginine biosynthesis; L-arginine from L-ornithine and carbamoyl phosphate: step 1/3. Functionally, reversibly catalyzes the transfer of the carbamoyl group from carbamoyl phosphate (CP) to the N(epsilon) atom of ornithine (ORN) to produce L-citrulline. The chain is Ornithine carbamoyltransferase from Acinetobacter baylyi (strain ATCC 33305 / BD413 / ADP1).